A 188-amino-acid polypeptide reads, in one-letter code: ATP synthase subunit b (188 aa).

A helical membrane pass occupies residues 19 to 39; it reads VYVLGATIVSFLVLFLFITYF.

Belongs to the ATPase B chain family. In terms of assembly, F-type ATPases have 2 components, F(1) - the catalytic core - and F(0) - the membrane proton channel. F(1) has five subunits: alpha(3), beta(3), gamma(1), delta(1), epsilon(1). F(0) has three main subunits: a(1), b(2) and c(10-14). The alpha and beta chains form an alternating ring which encloses part of the gamma chain. F(1) is attached to F(0) by a central stalk formed by the gamma and epsilon chains, while a peripheral stalk is formed by the delta and b chains.

It is found in the cell membrane. F(1)F(0) ATP synthase produces ATP from ADP in the presence of a proton or sodium gradient. F-type ATPases consist of two structural domains, F(1) containing the extramembraneous catalytic core and F(0) containing the membrane proton channel, linked together by a central stalk and a peripheral stalk. During catalysis, ATP synthesis in the catalytic domain of F(1) is coupled via a rotary mechanism of the central stalk subunits to proton translocation. Functionally, component of the F(0) channel, it forms part of the peripheral stalk, linking F(1) to F(0). The chain is ATP synthase subunit b from Mesomycoplasma hyopneumoniae (strain 7448) (Mycoplasma hyopneumoniae).